We begin with the raw amino-acid sequence, 213 residues long: Non-structural protein NP-1 (213 aa).

The segment at 1–80 (MERSRSPRET…ATRKETATKK (80 aa)) is disordered. 2 stretches are compositionally biased toward basic and acidic residues: residues 15 to 33 (SRDKSDADWSERRREERTR) and 43 to 58 (AHGERSWGSWRSREKN).

It belongs to the Bocaparvovirus Non-structural protein NP-1 family.

The protein resides in the host nucleus. Its function is as follows. Required for the expression of the capsid proteins. Performs the splicing and internal polyadenylation of the viral capsid-encoding mRNA precursor, which allows its maturation and expression. Transactivates the viral promoter. This Bos taurus (Bovine) protein is Non-structural protein NP-1 (NP1).